Here is a 130-residue protein sequence, read N- to C-terminus: MLVTITCFGLNQACIKNHVVILNLLAPGRILEYHCYSNVDDLGVKRLDFNATPFTIKFHDEIPNLTKWNCILRQGPNNSMEYSYDVEVYKAGPRLIPRCGQLRAWAARIDGIYFARKYNTPLKRVLFWNK.

Residues Asn64 and Asn77 are each glycosylated (N-linked (GlcNAc...) asparagine).

This sequence belongs to the plant self-incompatibility (S1) protein family.

The protein localises to the secreted. In Arabidopsis thaliana (Mouse-ear cress), this protein is S-protein homolog 30.